The sequence spans 116 residues: Large ribosomal subunit protein bL17 (116 aa).

Belongs to the bacterial ribosomal protein bL17 family. Part of the 50S ribosomal subunit. Contacts protein L32.

The protein is Large ribosomal subunit protein bL17 of Helicobacter pylori (strain P12).